Reading from the N-terminus, the 301-residue chain is Probable alpha-L-glutamate ligase (301 aa).

Positions 104 to 287 constitute an ATP-grasp domain; that stretch reads LQLLSRKGIG…VADMIFEFIE (184 aa). Residues K141, 178–179, D187, and 211–213 contribute to the ATP site; these read EF and RSN. D248, E260, and N262 together coordinate Mg(2+). Residues D248, E260, and N262 each contribute to the Mn(2+) site.

The protein belongs to the RimK family. It depends on Mg(2+) as a cofactor. Mn(2+) is required as a cofactor.

This chain is Probable alpha-L-glutamate ligase, found in Vibrio atlanticus (strain LGP32) (Vibrio splendidus (strain Mel32)).